We begin with the raw amino-acid sequence, 368 residues long: Core-capsid bridging protein (368 aa).

Disordered stretches follow at residues 17–49 and 307–340; these read EIYG…DELD and GYRG…QPVL. Residues 22–31 are compositionally biased toward basic and acidic residues; it reads PKKEEQDYKP. Composition is skewed to basic residues over residues 32-41 and 314-337; these read RKLKRVKKKK and RPRR…RRRQ.

It belongs to the adenoviridae core-capsid bridging protein family. As to quaternary structure, monomer. Homodimer. Exists in equilibrium between monomers and dimers in solution. Interacts with the histone-like nucleoprotein; this interactions bridge the virus core to the capsid. Interacts with core protein X; this interactions bridge the virus core to the capsid. Interacts with the endosome lysis protein VI; this interactions bridge the virus core to the capsid. Interacts with the peripentonal hexons. Interacts with host NPM1; this interaction might play a role in virus assembly. During virion entry, is ubiquitinated at the nuclear pore complex by host MIB1. This dissociates viral genomic DNA from capsid and allows genome delivery into nucleus for infection.

It localises to the virion. The protein localises to the host nucleus. Its subcellular location is the host nucleolus. Associates loosely with the viral DNA to form an outer shell around the nucleoprotein-DNA complex and links it with the capsid by binding the endosome lysis protein. During entry, secures the viral genome in the capsid until it reaches the nuclear pore complex, preventing innate immunity responses. Dissociates from the viral genome at nuclear pore. Might be involved in nuclear capsid assembly of the viral particles through its association with NPM1/nucleophosmin. This chain is Core-capsid bridging protein, found in Human adenovirus C serotype 5 (HAdV-5).